Here is a 118-residue protein sequence, read N- to C-terminus: Large ribosomal subunit protein bL19 (118 aa).

This sequence belongs to the bacterial ribosomal protein bL19 family.

This protein is located at the 30S-50S ribosomal subunit interface and may play a role in the structure and function of the aminoacyl-tRNA binding site. The sequence is that of Large ribosomal subunit protein bL19 from Metamycoplasma arthritidis (strain 158L3-1) (Mycoplasma arthritidis).